The primary structure comprises 657 residues: tRNA 5-methylaminomethyl-2-thiouridine biosynthesis bifunctional protein MnmC (657 aa).

The segment at 1-233 (MPRGLILATP…KRDMTVAAFP (233 aa)) is tRNA (mnm(5)s(2)U34)-methyltransferase. The interval 256-657 (LGAGLAGCSV…RALRHGKHAA (402 aa)) is FAD-dependent cmnm(5)s(2)U34 oxidoreductase.

It in the N-terminal section; belongs to the methyltransferase superfamily. tRNA (mnm(5)s(2)U34)-methyltransferase family. The protein in the C-terminal section; belongs to the DAO family. Requires FAD as cofactor.

Its subcellular location is the cytoplasm. It carries out the reaction 5-aminomethyl-2-thiouridine(34) in tRNA + S-adenosyl-L-methionine = 5-methylaminomethyl-2-thiouridine(34) in tRNA + S-adenosyl-L-homocysteine + H(+). Its function is as follows. Catalyzes the last two steps in the biosynthesis of 5-methylaminomethyl-2-thiouridine (mnm(5)s(2)U) at the wobble position (U34) in tRNA. Catalyzes the FAD-dependent demodification of cmnm(5)s(2)U34 to nm(5)s(2)U34, followed by the transfer of a methyl group from S-adenosyl-L-methionine to nm(5)s(2)U34, to form mnm(5)s(2)U34. The protein is tRNA 5-methylaminomethyl-2-thiouridine biosynthesis bifunctional protein MnmC of Ralstonia nicotianae (strain ATCC BAA-1114 / GMI1000) (Ralstonia solanacearum).